The primary structure comprises 158 residues: 3-hydroxyacyl-[acyl-carrier-protein] dehydratase FabZ (158 aa).

Histidine 57 is a catalytic residue.

The protein belongs to the thioester dehydratase family. FabZ subfamily.

It localises to the cytoplasm. The enzyme catalyses a (3R)-hydroxyacyl-[ACP] = a (2E)-enoyl-[ACP] + H2O. Involved in unsaturated fatty acids biosynthesis. Catalyzes the dehydration of short chain beta-hydroxyacyl-ACPs and long chain saturated and unsaturated beta-hydroxyacyl-ACPs. The sequence is that of 3-hydroxyacyl-[acyl-carrier-protein] dehydratase FabZ from Anaeromyxobacter sp. (strain Fw109-5).